We begin with the raw amino-acid sequence, 441 residues long: Transcription factor TOXE (441 aa).

The interval T14–K40 is basic DNA-binding region. A disordered region spans residues F209–S243. Residues N212 to P221 show a composition bias toward basic and acidic residues. Residues C228 to N241 show a composition bias toward polar residues. 4 ANK repeats span residues D289 to I318, S322 to A351, E355 to E384, and E413 to V440.

This sequence belongs to the bZIP family. As to quaternary structure, monomer.

It localises to the nucleus. In terms of biological role, transcription factor, part of the diffuse TOX2 gene cluster that mediates the biosynthesis of the HC-toxin, cyclic tetrapeptide of structure cyclo(D-Pro-L-Ala-D-Ala-L-Aeo), where Aeo stands for 2-amino-9,10-epoxi-8-oxodecanoic acid. HC-toxin is a determinant of specificity and virulence in the interaction between the producing fungus and its host, maize. TOXE is a pathway-specific transcription factor which coordinates the expression of genes involved in HC-toxin biosynthesis. Binds to the tox-box, a 10-bp motif with the consensus 5'-ATCTCNCGNA-3', which is found in the promoter of all genes involved in HC-toxin biosynthesis. Required for pathogenicity of the fungus on maize. The chain is Transcription factor TOXE from Cochliobolus carbonum (Maize leaf spot fungus).